We begin with the raw amino-acid sequence, 476 residues long: MLDLQPSDRRHGAPSSSGGVSGGDELIRTYKGWKGNNVFFLGGRLVFGPDARSILITVFLITAPVIVFCIFVGRKFIDDFPHHRGVSVLAVAVGLILLDLVFLLLTSARDPGIIPRNLYPPEPESNEGNGEPRLAHTPQSRLPRTKDMIVNGITVKIKYCDTCMLYRPPRASHCSICNNCVEKFDHHCPWLGQCIGLRNYRFYFMFVLCSTLLCIYVHVFCWIYVKRIMDSENINIWKSFLKTPASIALIIYTFICVWFVGGLTCFHLYLMSTNQSTYENFRYRYDRHENPFNKGIVGNFMEVFCTNVAVSQNSFREKVSKEPAIPPRTVNGGMSSPSLQKVSNDIEMGRKPVWHETVEEELGDIEKDMEAGVASRDLSRMLPPEESEGRGIMHSRESSRGRGIMHSRESSRGRRGGSWELSSRVNEDLRTRDESVSRVGEDSSESSDNDASRDLHVEIYDAVTSRGRTGTGIGRL.

Over residues 1–11 the composition is skewed to basic and acidic residues; sequence MLDLQPSDRRH. Positions 1–21 are disordered; that stretch reads MLDLQPSDRRHGAPSSSGGVS. Helical transmembrane passes span 53-73 and 85-105; these read SILI…IFVG and GVSV…FLLL. The disordered stretch occupies residues 119–138; sequence YPPEPESNEGNGEPRLAHTP. The DHHC domain maps to 158–208; that stretch reads KYCDTCMLYRPPRASHCSICNNCVEKFDHHCPWLGQCIGLRNYRFYFMFVL. Cysteine 188 serves as the catalytic S-palmitoyl cysteine intermediate. Transmembrane regions (helical) follow at residues 209 to 223 and 246 to 266; these read CSTL…FCWI and SIAL…LTCF. Disordered stretches follow at residues 320–340 and 373–454; these read SKEP…PSLQ and VASR…ASRD. Residue serine 336 is modified to Phosphoserine. The segment covering 387 to 412 has biased composition (basic and acidic residues); it reads SEGRGIMHSRESSRGRGIMHSRESSR. Residue serine 418 is modified to Phosphoserine. Over residues 425–441 the composition is skewed to basic and acidic residues; it reads VNEDLRTRDESVSRVGE.

The protein belongs to the DHHC palmitoyltransferase family.

The protein resides in the cell membrane. It catalyses the reaction L-cysteinyl-[protein] + hexadecanoyl-CoA = S-hexadecanoyl-L-cysteinyl-[protein] + CoA. In terms of biological role, palmitoyl acyltransferase. The protein is Probable protein S-acyltransferase 5 (PAT05) of Arabidopsis thaliana (Mouse-ear cress).